Here is an 86-residue protein sequence, read N- to C-terminus: Large ribosomal subunit protein bL27 (86 aa).

The disordered stretch occupies residues 1-24 (MAHKKGTGSTRNGRDSNSKRLGVK).

The protein belongs to the bacterial ribosomal protein bL27 family.

This Prochlorococcus marinus (strain AS9601) protein is Large ribosomal subunit protein bL27.